The primary structure comprises 398 residues: Endoglucanase (398 aa).

The N-terminal stretch at 1–23 (MSPLKCMALAALGAVMFVGSAQA) is a signal peptide. Residue Glu-58 is the Proton donor of the active site. The active-site Nucleophile is the Asp-119.

It belongs to the glycosyl hydrolase 8 (cellulase D) family.

Its subcellular location is the secreted. The catalysed reaction is Endohydrolysis of (1-&gt;4)-beta-D-glucosidic linkages in cellulose, lichenin and cereal beta-D-glucans.. The protein operates within glycan metabolism; bacterial cellulose biosynthesis. Its function is as follows. Hydrolyzes carboxymethylcellulose. The polypeptide is Endoglucanase (bcsZ) (Pseudomonas fluorescens (strain SBW25)).